Here is a 111-residue protein sequence, read N- to C-terminus: Nucleoid-associated protein Teth514_0034 (111 aa).

It belongs to the YbaB/EbfC family. In terms of assembly, homodimer.

The protein localises to the cytoplasm. It localises to the nucleoid. Binds to DNA and alters its conformation. May be involved in regulation of gene expression, nucleoid organization and DNA protection. This is Nucleoid-associated protein Teth514_0034 from Thermoanaerobacter sp. (strain X514).